The following is a 211-amino-acid chain: Protein-L-isoaspartate O-methyltransferase (211 aa).

Serine 62 is an active-site residue.

It belongs to the methyltransferase superfamily. L-isoaspartyl/D-aspartyl protein methyltransferase family.

It is found in the cytoplasm. The catalysed reaction is [protein]-L-isoaspartate + S-adenosyl-L-methionine = [protein]-L-isoaspartate alpha-methyl ester + S-adenosyl-L-homocysteine. Catalyzes the methyl esterification of L-isoaspartyl residues in peptides and proteins that result from spontaneous decomposition of normal L-aspartyl and L-asparaginyl residues. It plays a role in the repair and/or degradation of damaged proteins. The chain is Protein-L-isoaspartate O-methyltransferase from Shewanella putrefaciens (strain CN-32 / ATCC BAA-453).